The chain runs to 221 residues: Octanoyltransferase (221 aa).

A BPL/LPL catalytic domain is found at 36-221 (KKEDNQLFFC…LRSIFMEIFA (186 aa)). Substrate-binding positions include 81–88 (RGGDITYH), 154–156 (AIG), and 167–169 (GFA). The active-site Acyl-thioester intermediate is C185.

Belongs to the LipB family.

The protein resides in the cytoplasm. It carries out the reaction octanoyl-[ACP] + L-lysyl-[protein] = N(6)-octanoyl-L-lysyl-[protein] + holo-[ACP] + H(+). Its pathway is protein modification; protein lipoylation via endogenous pathway; protein N(6)-(lipoyl)lysine from octanoyl-[acyl-carrier-protein]: step 1/2. Its function is as follows. Catalyzes the transfer of endogenously produced octanoic acid from octanoyl-acyl-carrier-protein onto the lipoyl domains of lipoate-dependent enzymes. Lipoyl-ACP can also act as a substrate although octanoyl-ACP is likely to be the physiological substrate. This is Octanoyltransferase from Parabacteroides distasonis (strain ATCC 8503 / DSM 20701 / CIP 104284 / JCM 5825 / NCTC 11152).